A 147-amino-acid polypeptide reads, in one-letter code: SsrA-binding protein (147 aa).

The segment at 119–147 (AKGKKQHDKRESEKQKEWERDKQRLMRPK) is disordered. A compositionally biased stretch (basic and acidic residues) spans 126-147 (DKRESEKQKEWERDKQRLMRPK).

It belongs to the SmpB family.

The protein localises to the cytoplasm. Its function is as follows. Required for rescue of stalled ribosomes mediated by trans-translation. Binds to transfer-messenger RNA (tmRNA), required for stable association of tmRNA with ribosomes. tmRNA and SmpB together mimic tRNA shape, replacing the anticodon stem-loop with SmpB. tmRNA is encoded by the ssrA gene; the 2 termini fold to resemble tRNA(Ala) and it encodes a 'tag peptide', a short internal open reading frame. During trans-translation Ala-aminoacylated tmRNA acts like a tRNA, entering the A-site of stalled ribosomes, displacing the stalled mRNA. The ribosome then switches to translate the ORF on the tmRNA; the nascent peptide is terminated with the 'tag peptide' encoded by the tmRNA and targeted for degradation. The ribosome is freed to recommence translation, which seems to be the essential function of trans-translation. This is SsrA-binding protein from Nitrosospira multiformis (strain ATCC 25196 / NCIMB 11849 / C 71).